The chain runs to 324 residues: Elongation factor P--(R)-beta-lysine ligase (324 aa).

Residue 75-77 (SPE) participates in substrate binding. Residues 99–101 (RNE) and N108 contribute to the ATP site. Y117 contacts substrate. 243 to 244 (EL) is a binding site for ATP. E250 serves as a coordination point for substrate. G299 provides a ligand contact to ATP.

The protein belongs to the class-II aminoacyl-tRNA synthetase family. EpmA subfamily. As to quaternary structure, homodimer.

It carries out the reaction D-beta-lysine + L-lysyl-[protein] + ATP = N(6)-((3R)-3,6-diaminohexanoyl)-L-lysyl-[protein] + AMP + diphosphate + H(+). In terms of biological role, with EpmB is involved in the beta-lysylation step of the post-translational modification of translation elongation factor P (EF-P). Catalyzes the ATP-dependent activation of (R)-beta-lysine produced by EpmB, forming a lysyl-adenylate, from which the beta-lysyl moiety is then transferred to the epsilon-amino group of a conserved specific lysine residue in EF-P. This chain is Elongation factor P--(R)-beta-lysine ligase, found in Vibrio cholerae serotype O1 (strain ATCC 39315 / El Tor Inaba N16961).